The sequence spans 222 residues: Collectrin (222 aa).

The first 14 residues, 1–14 (MLWLLFFLVTAIHA), serve as a signal peptide directing secretion. Over 15-141 (ELCQPGAENA…LAPPMDPSVP (127 aa)) the chain is Extracellular. Residues 21 to 222 (AENAFKVRLS…MTEDERLTPL (202 aa)) form the Collectrin-like domain. N-linked (GlcNAc...) asparagine glycosylation is found at N76 and N93. A helical transmembrane segment spans residues 142-162 (IWIIIFGVIFCIIIVAIALLI). Over 163-222 (LSGIWQRRRKNKEPSEVDDAEDKCENMITIENGIPSDPLDMKGGHINDAFMTEDERLTPL) the chain is Cytoplasmic. A phosphothreonine mark is found at T214 and T220.

The protein belongs to the CLTRN family. In terms of assembly, monomer. Homodimer; dimerization prevents CLTRN cleavage by BACE2. Interacts with SLC6A18; this interaction regulates the trafficking of SLC6A18 to the cell membrane and its amino acid transporter activity. Interacts with SLC6A19; this interaction regulates the trafficking of SLC6A19 to the cell membrane and its amino acid transporter activity. Interacts with SNAPIN. Glycosylated. Glycosylation is required for plasma membrane localization and for its cleavage by BACE2. Post-translationally, proteolytically processed in pancreatic beta cells by BACE2 leading to the generation and extracellular release of soluble CLTRN, and a corresponding cell-associated C-terminal fragment which is later cleaved by gamma-secretase. This shedding process inactivates CLTRN. Three cleavage sites have been identified for BACE2, two clustered sites after Phe-116 and Leu-118 and a more membrane proximal site at Phe-125; the preferred BACE2 cleavage site seems to be between Phe-125 and Leu-126, Phe-116 and Leu-118 act as alternative sites. As to expression, kidney; collecting ducts. Pancreas; beta cells of islets.

The protein localises to the cell membrane. Functionally, plays an important role in amino acid transport by acting as binding partner of amino acid transporters SLC6A18 and SLC6A19, regulating their trafficking on the cell surface and their amino acid transporter activity. May also play a role in trafficking of amino acid transporters SLC3A1 and SLC7A9 to the renal cortical cell membrane. Regulator of SNARE complex function. Stimulator of beta cell replication. The sequence is that of Collectrin from Homo sapiens (Human).